Consider the following 338-residue polypeptide: Phenylalanine--tRNA ligase alpha subunit (338 aa).

Glu-252 lines the Mg(2+) pocket.

It belongs to the class-II aminoacyl-tRNA synthetase family. Phe-tRNA synthetase alpha subunit type 1 subfamily. Tetramer of two alpha and two beta subunits. It depends on Mg(2+) as a cofactor.

Its subcellular location is the cytoplasm. The catalysed reaction is tRNA(Phe) + L-phenylalanine + ATP = L-phenylalanyl-tRNA(Phe) + AMP + diphosphate + H(+). The sequence is that of Phenylalanine--tRNA ligase alpha subunit from Azotobacter vinelandii (strain DJ / ATCC BAA-1303).